A 781-amino-acid polypeptide reads, in one-letter code: DNA translocase FtsK 2 (781 aa).

The next 4 helical transmembrane spans lie at leucine 24–leucine 44, phenylalanine 74–leucine 94, alanine 120–isoleucine 140, and glycine 170–phenylalanine 190. Residues histidine 191–glutamate 781 are Cytoplasmic-facing. In terms of domain architecture, FtsK spans glycine 414–arginine 623. ATP is bound at residue glycine 434–valine 439.

It belongs to the FtsK/SpoIIIE/SftA family. In terms of assembly, homohexamer. Forms a ring that surrounds DNA.

Its subcellular location is the cell inner membrane. In terms of biological role, essential cell division protein that coordinates cell division and chromosome segregation. The N-terminus is involved in assembly of the cell-division machinery. The C-terminus functions as a DNA motor that moves dsDNA in an ATP-dependent manner towards the dif recombination site, which is located within the replication terminus region. Translocation stops specifically at Xer-dif sites, where FtsK interacts with the Xer recombinase, allowing activation of chromosome unlinking by recombination. FtsK orienting polar sequences (KOPS) guide the direction of DNA translocation. FtsK can remove proteins from DNA as it translocates, but translocation stops specifically at XerCD-dif site, thereby preventing removal of XerC and XerD from dif. The protein is DNA translocase FtsK 2 (ftsK2) of Ralstonia nicotianae (strain ATCC BAA-1114 / GMI1000) (Ralstonia solanacearum).